The sequence spans 213 residues: 3-isopropylmalate dehydratase small subunit (213 aa).

It belongs to the LeuD family. LeuD type 1 subfamily. As to quaternary structure, heterodimer of LeuC and LeuD.

The enzyme catalyses (2R,3S)-3-isopropylmalate = (2S)-2-isopropylmalate. The protein operates within amino-acid biosynthesis; L-leucine biosynthesis; L-leucine from 3-methyl-2-oxobutanoate: step 2/4. Functionally, catalyzes the isomerization between 2-isopropylmalate and 3-isopropylmalate, via the formation of 2-isopropylmaleate. This chain is 3-isopropylmalate dehydratase small subunit, found in Neisseria meningitidis serogroup B (strain ATCC BAA-335 / MC58).